The following is a 318-amino-acid chain: Probable cell division protein WhiA (318 aa).

A DNA-binding region (H-T-H motif) is located at residues 281-314 (SLKELGEMLSPPVGKSGVNHRLRRIEKIAEELSK).

The protein belongs to the WhiA family.

Its function is as follows. Involved in cell division and chromosome segregation. This Clostridium tetani (strain Massachusetts / E88) protein is Probable cell division protein WhiA.